The chain runs to 119 residues: Protein Wnt-4 (119 aa).

Serine 1 carries the O-palmitoleoyl serine; by PORCN lipid modification. 2 cysteine pairs are disulfide-bonded: cysteine 69–cysteine 100 and cysteine 85–cysteine 95. Asparagine 86 is a glycosylation site (N-linked (GlcNAc...) asparagine).

This sequence belongs to the Wnt family. Post-translationally, palmitoleoylation is required for efficient binding to frizzled receptors. Depalmitoleoylation leads to Wnt signaling pathway inhibition.

The protein localises to the secreted. The protein resides in the extracellular space. It is found in the extracellular matrix. Its function is as follows. Ligand for members of the frizzled family of seven transmembrane receptors. Plays an important role in embryonic development. This chain is Protein Wnt-4 (WNT-4), found in Plethodon jordani (Red-cheeked salamander).